A 365-amino-acid polypeptide reads, in one-letter code: Transcription factor MYB93 (365 aa).

HTH myb-type domains are found at residues 9–61 and 62–116; these read ENGL…TNYL and RPDI…KKKL. 2 consecutive DNA-binding regions (H-T-H motif) follow at residues 37–61 and 89–112; these read WRALPKLADLNRCGKSCRLRWTNYL and WSAIATHLQGRTDNEIKNFWNTHL.

As to quaternary structure, interacts with FBX5.

It is found in the nucleus. It localises to the cytoplasm. Functionally, transcription factor that acts as a negative regulator of lateral root (LR) development. Required for normal auxin responses during LR development. May be part of a negative feedback loop stimulated specifically in the endodermis upon LR initiation to ensure that LRs are formed only in the correct place. In Arabidopsis thaliana (Mouse-ear cress), this protein is Transcription factor MYB93.